The following is a 197-amino-acid chain: Adenylate kinase 1 (197 aa).

19-24 (GSGKGT) lines the ATP pocket. The tract at residues 39-68 (SSGDLLRAEVQSGSPKGKELKAMMERGELV) is NMP. Residues Ser-40, Arg-45, 95-98 (GYPR), and Gln-102 contribute to the AMP site. An LID region spans residues 132-142 (KRAETSNRVDD). Arg-133 is an ATP binding site. AMP is bound by residues Arg-139 and Arg-150. Gly-178 contributes to the ATP binding site.

This sequence belongs to the adenylate kinase family. AK1 subfamily. In terms of assembly, monomer. Mg(2+) is required as a cofactor.

It is found in the cytoplasm. The enzyme catalyses AMP + ATP = 2 ADP. It participates in purine metabolism; purine nucleotide biosynthesis. Catalyzes the reversible transfer of the terminal phosphate group between ATP and AMP. Plays an important role in cellular energy homeostasis and in adenine nucleotide metabolism. In Schistosoma mansoni (Blood fluke), this protein is Adenylate kinase 1.